Here is a 185-residue protein sequence, read N- to C-terminus: Peptidoglycan-recognition protein SC1a (185 aa).

An N-terminal signal peptide occupies residues 1-21; the sequence is MVSKVALLLAVLVCSQYMAQG. Residues 46 to 170 form the N-acetylmuramoyl-L-alanine amidase domain; that stretch reads SYAIIHHTAG…RQVSATECPG (125 aa). A Zn(2+)-binding site is contributed by H51. Cysteines 58 and 64 form a disulfide. Positions 160 and 168 each coordinate Zn(2+).

This sequence belongs to the N-acetylmuramoyl-L-alanine amidase 2 family. Zn(2+) serves as cofactor.

It localises to the secreted. It catalyses the reaction Hydrolyzes the link between N-acetylmuramoyl residues and L-amino acid residues in certain cell-wall glycopeptides.. Its function is as follows. N-acetylmuramyl-L-alanine amidase involved in innate immunity by degrading bacterial peptidoglycans (PGN). Plays a scavenger role by digesting biologically active PGN into biologically inactive fragments. Has no direct bacteriolytic activity. This Drosophila melanogaster (Fruit fly) protein is Peptidoglycan-recognition protein SC1a.